Reading from the N-terminus, the 243-residue chain is Carboxy-S-adenosyl-L-methionine synthase (243 aa).

Residues tyrosine 40, 65–67 (GCS), 90–91 (DN), 118–119 (DI), asparagine 133, and arginine 200 each bind S-adenosyl-L-methionine.

The protein belongs to the class I-like SAM-binding methyltransferase superfamily. Cx-SAM synthase family. As to quaternary structure, homodimer.

The enzyme catalyses prephenate + S-adenosyl-L-methionine = carboxy-S-adenosyl-L-methionine + 3-phenylpyruvate + H2O. Its function is as follows. Catalyzes the conversion of S-adenosyl-L-methionine (SAM) to carboxy-S-adenosyl-L-methionine (Cx-SAM). The protein is Carboxy-S-adenosyl-L-methionine synthase of Shewanella oneidensis (strain ATCC 700550 / JCM 31522 / CIP 106686 / LMG 19005 / NCIMB 14063 / MR-1).